A 222-amino-acid polypeptide reads, in one-letter code: Kinetochore protein Spc25 (222 aa).

Positions 51-100 (RHQRKVGKLQKVIMERREELDKRVSFIEELDRELEATKLRSLAMKDRIKQ) form a coiled coil.

It belongs to the SPC25 family. In terms of assembly, component of the Ndc80 complex, which is composed of Ndc80, Nuf2 and Spc25.

The protein resides in the nucleus. Its subcellular location is the chromosome. It is found in the centromere. It localises to the kinetochore. In terms of biological role, acts as a component of the essential kinetochore-associated Ndc80 complex, which is required for chromosome segregation and spindle checkpoint activity during meiosis and mitosis. Required for kinetochore integrity and the organization of stable microtubule binding sites in the outer plate of the kinetochore. Participates in SAC signaling that responds specifically to disruptions in spindle microtubule dynamics. The NDC80 complex synergistically enhances the affinity of the SKA1 complex for microtubules and may allow the NDC80 complex to track depolymerizing microtubules. The chain is Kinetochore protein Spc25 from Drosophila sechellia (Fruit fly).